The primary structure comprises 298 residues: Bifunctional protein FolD (298 aa).

NADP(+) is bound by residues 165–167, Ser190, and Ile231; that span reads GRS.

Belongs to the tetrahydrofolate dehydrogenase/cyclohydrolase family. In terms of assembly, homodimer.

It catalyses the reaction (6R)-5,10-methylene-5,6,7,8-tetrahydrofolate + NADP(+) = (6R)-5,10-methenyltetrahydrofolate + NADPH. It carries out the reaction (6R)-5,10-methenyltetrahydrofolate + H2O = (6R)-10-formyltetrahydrofolate + H(+). It participates in one-carbon metabolism; tetrahydrofolate interconversion. Its function is as follows. Catalyzes the oxidation of 5,10-methylenetetrahydrofolate to 5,10-methenyltetrahydrofolate and then the hydrolysis of 5,10-methenyltetrahydrofolate to 10-formyltetrahydrofolate. In Prochlorococcus marinus (strain MIT 9301), this protein is Bifunctional protein FolD.